Consider the following 269-residue polypeptide: Calretinin (269 aa).

EF-hand domains lie at 14 to 49 (LSAS…LESA), 61 to 96 (SLGD…EENF), 105 to 140 (GSSS…LLKK), 149 to 184 (KLQE…QENF), 193 to 228 (LSSE…LYEK), and 230 to 265 (KKEM…VLCS). Ca(2+)-binding residues include aspartate 27, aspartate 29, asparagine 31, tyrosine 33, glutamate 38, aspartate 74, asparagine 76, aspartate 78, lysine 80, glutamate 85, aspartate 118, aspartate 120, serine 122, tyrosine 124, glutamate 129, aspartate 162, asparagine 164, aspartate 166, lysine 168, glutamate 173, aspartate 206, aspartate 208, serine 210, and glutamate 217.

Belongs to the calbindin family.

Its subcellular location is the synapse. The protein resides in the cell projection. It localises to the dendrite. Calcium-binding protein involved in calcium homeostasis and signal transduction. It plays a critical role in buffering intracellular calcium levels and modulating calcium-dependent signaling pathways. Predominantly expressed in specific neuronal populations, influences synaptic plasticity and neuronal excitability, contributing to learning and memory. During embryonic development, it facilitates neuronal differentiation and maturation. The polypeptide is Calretinin (CALB2) (Gallus gallus (Chicken)).